The primary structure comprises 613 residues: Dihydroxy-acid dehydratase (613 aa).

A Mg(2+)-binding site is contributed by aspartate 81. Cysteine 122 contributes to the [2Fe-2S] cluster binding site. Mg(2+)-binding residues include aspartate 123 and lysine 124. Residue lysine 124 is modified to N6-carboxylysine. Cysteine 193 provides a ligand contact to [2Fe-2S] cluster. Glutamate 489 provides a ligand contact to Mg(2+). Serine 515 acts as the Proton acceptor in catalysis.

The protein belongs to the IlvD/Edd family. Homodimer. [2Fe-2S] cluster serves as cofactor. Requires Mg(2+) as cofactor.

It catalyses the reaction (2R)-2,3-dihydroxy-3-methylbutanoate = 3-methyl-2-oxobutanoate + H2O. It carries out the reaction (2R,3R)-2,3-dihydroxy-3-methylpentanoate = (S)-3-methyl-2-oxopentanoate + H2O. Its pathway is amino-acid biosynthesis; L-isoleucine biosynthesis; L-isoleucine from 2-oxobutanoate: step 3/4. The protein operates within amino-acid biosynthesis; L-valine biosynthesis; L-valine from pyruvate: step 3/4. In terms of biological role, functions in the biosynthesis of branched-chain amino acids. Catalyzes the dehydration of (2R,3R)-2,3-dihydroxy-3-methylpentanoate (2,3-dihydroxy-3-methylvalerate) into 2-oxo-3-methylpentanoate (2-oxo-3-methylvalerate) and of (2R)-2,3-dihydroxy-3-methylbutanoate (2,3-dihydroxyisovalerate) into 2-oxo-3-methylbutanoate (2-oxoisovalerate), the penultimate precursor to L-isoleucine and L-valine, respectively. In Pseudomonas fluorescens (strain Pf0-1), this protein is Dihydroxy-acid dehydratase.